The sequence spans 946 residues: Bifunctional lysine-specific demethylase and histidyl-hydroxylase NO66 (946 aa).

The segment at Tyr14–Val435 is disordered. Polar residues-rich tracts occupy residues Ser17–Thr28 and Ala37–Ser46. The span at Ser59 to Ser73 shows a compositional bias: low complexity. A compositionally biased stretch (polar residues) spans Thr99–Glu110. A compositionally biased stretch (basic and acidic residues) spans Glu117–Gly128. Residues Thr169–Arg186 show a composition bias toward polar residues. A compositionally biased stretch (basic and acidic residues) spans Glu187–Gly198. Residues Thr239 to Arg256 are compositionally biased toward polar residues. Basic and acidic residues predominate over residues Glu257 to Gly268. Phosphothreonine is present on Thr309. The segment covering Thr309–Glu327 has biased composition (polar residues). Over residues Ser328 to Gly338 the composition is skewed to basic and acidic residues. Residue Ser339 is modified to Phosphoserine. A compositionally biased stretch (polar residues) spans Thr379–Glu397. A compositionally biased stretch (basic and acidic residues) spans Ser398–Gly408. Residues Arg416–Asn433 are compositionally biased toward polar residues. Positions Asn606 to Val742 constitute a JmjC domain. His646, Asp648, and His708 together coordinate Fe cation.

The protein belongs to the ROX family. NO66 subfamily. Requires Fe(2+) as cofactor.

The protein localises to the nucleus. The enzyme catalyses N(6),N(6)-dimethyl-L-lysyl(36)-[histone H3] + 2 2-oxoglutarate + 2 O2 = L-lysyl(36)-[histone H3] + 2 formaldehyde + 2 succinate + 2 CO2. Functionally, oxygenase that can act as both a histone lysine demethylase and a ribosomal histidine hydroxylase. Specifically demethylates 'Lys-4' (H3K4me) and 'Lys-36' (H3K36me) of histone H3, thereby playing a central role in histone code. The protein is Bifunctional lysine-specific demethylase and histidyl-hydroxylase NO66 of Drosophila pseudoobscura pseudoobscura (Fruit fly).